We begin with the raw amino-acid sequence, 339 residues long: Trace amine-associated receptor 2 (339 aa).

Residues 1-36 (MASFEAQQETFDCSEYGNGSCPENERSLGVRAAMYS) lie on the Extracellular side of the membrane. N-linked (GlcNAc...) asparagine glycosylation is present at asparagine 18. 2 disulfide bridges follow: cysteine 21-cysteine 185 and cysteine 104-cysteine 189. Residues 37-57 (LMACAIFITIFGNLAMIISIS) form a helical membrane-spanning segment. Topologically, residues 58–67 (YFKQLHTPTN) are cytoplasmic. A helical transmembrane segment spans residues 68–88 (LLILSMAVTDFLLGFTIMPYS). At 89 to 106 (MVRSVENCWYFGLTFCKI) the chain is on the extracellular side. A helical membrane pass occupies residues 107–127 (HYSFDLMLSITSIFHLCSVAV). At 128–150 (DRFYAICHPLHYCTKMTIPVVRR) the chain is on the cytoplasmic side. A helical transmembrane segment spans residues 151–171 (LLLVCWSVPGAFAFGVVFSEA). The Extracellular segment spans residues 172-195 (YADGIEGYDILVACSSSCPVMFNK). Residues 196–216 (LWGTTLFVAGFFTPSSMMVGI) traverse the membrane as a helical segment. The Cytoplasmic portion of the chain corresponds to 217–251 (YGKIFAVSKKHARVIDNLPENQNNQMRKDKKAAKT). A helical transmembrane segment spans residues 252-272 (LGIVMGVFLLCWFPCFFTILL). Residues 273–287 (DPFLNFSTPAVLFDA) lie on the Extracellular side of the membrane. A glycan (N-linked (GlcNAc...) asparagine) is linked at asparagine 277. A helical membrane pass occupies residues 288–310 (LTWFGYFNSTCNPLIYGFFYPWF). Topologically, residues 311–339 (RRALKYILLGKIFSSHFHNTNLFTQKETE) are cytoplasmic.

Belongs to the G-protein coupled receptor 1 family. In terms of tissue distribution, mainly expressed in neurons of the olfactory epithelium. Also present in the limbic brain areas receiving projection from the olfactory system and several brain regions, including the hippocampus, cerebellum, cortex, raphe nuclei, hypothalamus and habenula.

The protein resides in the cell membrane. Orphan olfactory receptor specific for trace amines. Trace amine compounds are enriched in animal body fluids and act on trace amine-associated receptors (TAARs) to elicit both intraspecific and interspecific innate behaviors. Ligand-binding causes a conformation change that triggers signaling via the G(s)-class of G-proteins which activate adenylate cyclase. May also be required to provide olfactory input into limbic brain areas to regulate emotional behaviors likely via modulation of the dopamine system. The chain is Trace amine-associated receptor 2 from Mus musculus (Mouse).